Here is a 572-residue protein sequence, read N- to C-terminus: Urease subunit alpha (572 aa).

The Urease domain occupies A134–G572. 3 residues coordinate Ni(2+): H139, H141, and K222. K222 is subject to N6-carboxylysine. H224 lines the substrate pocket. 2 residues coordinate Ni(2+): H251 and H277. H325 functions as the Proton donor in the catalytic mechanism. D365 provides a ligand contact to Ni(2+).

This sequence belongs to the metallo-dependent hydrolases superfamily. Urease alpha subunit family. In terms of assembly, heterotrimer of UreA (gamma), UreB (beta) and UreC (alpha) subunits. Three heterotrimers associate to form the active enzyme. The cofactor is Ni cation. Post-translationally, carboxylation allows a single lysine to coordinate two nickel ions.

The protein localises to the cytoplasm. The catalysed reaction is urea + 2 H2O + H(+) = hydrogencarbonate + 2 NH4(+). Its pathway is nitrogen metabolism; urea degradation; CO(2) and NH(3) from urea (urease route): step 1/1. This is Urease subunit alpha from Edwardsiella ictaluri (strain 93-146).